Here is a 916-residue protein sequence, read N- to C-terminus: Protein O-GlcNAcase (916 aa).

The tract at residues 1–50 is disordered; it reads MVQKESQAALEERESERNANPASVSGASLEPSAAPAPGEDNPSGAGAAAG. The GH84 domain occupies 60 to 336; sequence FLCGVVEGFY…TLATWYKSNM (277 aa). Gly-67, Lys-98, and Asp-174 together coordinate a protein. Asp-175 acts as the Proton donor in catalysis. Residues Tyr-219, 278–280, Asp-285, and Asn-313 contribute to the a protein site; that span reads WDN. A Phosphoserine modification is found at Ser-364. Positions 440 to 480 are disordered; the sequence is QGAALSGEPSALTKEEEKKQPDEEPMDMVVEKQEESEHKSD. Basic and acidic residues-rich tracts occupy residues 452 to 461 and 468 to 480; these read TKEEEKKQPD and VVEK…HKSD.

Belongs to the glycosyl hydrolase 84 family. Monomer. Interacts with CLOCK. Post-translationally, proteolytically cleaved by caspase-3 during apoptosis. The fragments interact with each other; cleavage does not decrease enzyme activity. Detected in spleen (at protein level). Ubiquitous. Expressed at highest levels in the brain and spleen.

It is found in the nucleus. The protein localises to the cytoplasm. It catalyses the reaction 3-O-(N-acetyl-beta-D-glucosaminyl)-L-seryl-[protein] + H2O = N-acetyl-D-glucosamine + L-seryl-[protein]. It carries out the reaction 3-O-(N-acetyl-beta-D-glucosaminyl)-L-threonyl-[protein] + H2O = L-threonyl-[protein] + N-acetyl-D-glucosamine. Inhibited by Cu(2+), Hg(2+), Cd(2+) and Zn(2+) at 1 mM. Not inhibited by Co(2+), Mg(2+), Ca(2+), Mn(2+), Fe(3+) and EDTA. Also inhibited by sodium chloride at 1M and 2-amino-2-hydroxymethyl-1,3-propanediol (trishydroxymethylaminomethane) at 75 mM. Cleaves GlcNAc but not GalNAc from O-glycosylated proteins. Deglycosylates a large and diverse number of proteins, such as CRYAB, ELK1, GSDMD, LMNB1 and TAB1. Can use p-nitrophenyl-beta-GlcNAc and 4-methylumbelliferone-GlcNAc as substrates but not p-nitrophenyl-beta-GalNAc or p-nitrophenyl-alpha-GlcNAc (in vitro). Does not bind acetyl-CoA and does not have histone acetyltransferase activity. In terms of biological role, lacks enzyme activity. In Rattus norvegicus (Rat), this protein is Protein O-GlcNAcase.